We begin with the raw amino-acid sequence, 183 residues long: Putative manganese efflux pump MntP (183 aa).

Helical transmembrane passes span 8–28, 39–59, 68–88, 108–128, 133–153, and 162–182; these read MIAL…VALG, IFYI…VGMA, FGSI…GQMI, LFFA…LGIF, MATI…GLLV, and GSYS…KLLF.

It belongs to the MntP (TC 9.B.29) family.

The protein resides in the cell membrane. Probably functions as a manganese efflux pump. This is Putative manganese efflux pump MntP from Geobacillus thermodenitrificans (strain NG80-2).